A 275-amino-acid polypeptide reads, in one-letter code: Membrane protein insertase YidC 1 (275 aa).

Residues 1-25 (MRKVLRVKKNIKIARIVPLVLLLVA) form the signal peptide. The N-palmitoyl cysteine moiety is linked to residue cysteine 26. The S-diacylglycerol cysteine moiety is linked to residue cysteine 26. The next 5 membrane-spanning stretches (helical) occupy residues 58–78 (SIGVGIILFTLTIRLMLMPLF), 129–149 (YASLLPLLIQMPVMIALFQAL), 171–191 (LYLLPVLAAVFTFLSTWLTNL), 198–216 (VMMTVMIYVMPLMIFFMGF), and 222–240 (VVLYWTVSNAFQVVQLLLL).

The protein belongs to the OXA1/ALB3/YidC family. Type 2 subfamily.

It is found in the cell membrane. Required for the insertion and/or proper folding and/or complex formation of integral membrane proteins into the membrane. Involved in integration of membrane proteins that insert both dependently and independently of the Sec translocase complex, as well as at least some lipoproteins. The sequence is that of Membrane protein insertase YidC 1 from Streptococcus pyogenes serotype M6 (strain ATCC BAA-946 / MGAS10394).